A 288-amino-acid polypeptide reads, in one-letter code: Transformer-2 protein homolog beta (288 aa).

Disordered stretches follow at residues 1 to 114 (MSDS…RANP) and 196 to 225 (TKRPHTPTPGIYMGRPTYGSSRRRDYYDRG). Residue S2 is modified to N-acetylserine. Phosphoserine is present on residues S2, S4, and S14. Residues 17–28 (ASRSGSAHGSGK) show a composition bias toward low complexity. Phosphoserine is present on S29. T33 bears the Phosphothreonine mark. Residues 59-109 (RSRRSSRRHYTRSRSRSRSHRRSRSRSYSRDYRRRHSHSHSPMSTRRRHVG) are compositionally biased toward basic residues. 6 positions are modified to phosphoserine: S83, S85, S87, S95, S97, and S99. Phosphothreonine is present on T103. Positions 118–196 (CCLGVFGLSL…RRIRVDFSIT (79 aa)) constitute an RRM domain. Residues 193-230 (FSITKRPHTPTPGIYMGRPTYGSSRRRDYYDRGYDRGY) are linker. K197 participates in a covalent cross-link: Glycyl lysine isopeptide (Lys-Gly) (interchain with G-Cter in SUMO2). Phosphothreonine is present on residues T201 and T203. Phosphoserine occurs at positions 215 and 237. At R241 the chain carries Asymmetric dimethylarginine; alternate. The residue at position 241 (R241) is a Dimethylated arginine; alternate. An Omega-N-methylarginine; alternate modification is found at R241. A disordered region spans residues 242-288 (GGGGGGGGWRAAQDRDQIYRRRSPSPYYSRGGYRSRSRSRSYSPRRY). The segment covering 274 to 288 (YRSRSRSRSYSPRRY) has biased composition (basic residues).

It belongs to the splicing factor SR family. In terms of assembly, found in a pre-mRNA exonic splicing enhancer (ESE) complex with TRA2B/SFRS10, SNRNP70, SNRPA1 and SRRM1. Binds to A3 enhancer proteins SFRS4, SFRS5, SFRS6 and SFRS9. Interacts with CPSF6, RBMY1A1, RBMX, RNPS1 and phosphorylated SFRS13A. Interacts with SAFB/SAFB1. Interacts with ILDR1 (via C-terminus) and ILDR2. In terms of processing, phosphorylated in the RS domains.

It localises to the nucleus. In terms of biological role, sequence-specific RNA-binding protein which participates in the control of pre-mRNA splicing. Can either activate or suppress exon inclusion. Acts additively with RBMX to promote exon 7 inclusion of the survival motor neuron SMN2. Activates the splicing of MAPT/Tau exon 10. Alters pre-mRNA splicing patterns by antagonizing the effects of splicing regulators, like RBMX. Binds to the AG-rich SE2 domain in the SMN exon 7 RNA. Binds to pre-mRNA. This chain is Transformer-2 protein homolog beta (TRA2B), found in Bos taurus (Bovine).